The sequence spans 147 residues: 3-dehydroquinate dehydratase (147 aa).

The Proton acceptor role is filled by tyrosine 25. Residues asparagine 76, histidine 82, and aspartate 89 each coordinate substrate. Catalysis depends on histidine 102, which acts as the Proton donor. Substrate is bound by residues 103–104 and arginine 113; that span reads LS.

The protein belongs to the type-II 3-dehydroquinase family. Homododecamer.

It carries out the reaction 3-dehydroquinate = 3-dehydroshikimate + H2O. It participates in metabolic intermediate biosynthesis; chorismate biosynthesis; chorismate from D-erythrose 4-phosphate and phosphoenolpyruvate: step 3/7. In terms of biological role, catalyzes a trans-dehydration via an enolate intermediate. The protein is 3-dehydroquinate dehydratase of Nostoc sp. (strain PCC 7120 / SAG 25.82 / UTEX 2576).